The chain runs to 333 residues: Ornithine carbamoyltransferase (333 aa).

Residues 56-59 (STRT), Gln83, Arg107, and 134-137 (HPTQ) contribute to the carbamoyl phosphate site. L-ornithine-binding positions include Asn167, Asp231, and 235–236 (SM). Carbamoyl phosphate contacts are provided by residues 273–274 (CL) and Arg318.

The protein belongs to the aspartate/ornithine carbamoyltransferase superfamily. OTCase family.

Its subcellular location is the cytoplasm. It carries out the reaction carbamoyl phosphate + L-ornithine = L-citrulline + phosphate + H(+). It functions in the pathway amino-acid biosynthesis; L-arginine biosynthesis; L-arginine from L-ornithine and carbamoyl phosphate: step 1/3. Reversibly catalyzes the transfer of the carbamoyl group from carbamoyl phosphate (CP) to the N(epsilon) atom of ornithine (ORN) to produce L-citrulline. The protein is Ornithine carbamoyltransferase (argF) of Staphylococcus aureus (strain Mu50 / ATCC 700699).